Reading from the N-terminus, the 332-residue chain is Glycerol-3-phosphate dehydrogenase [NAD(P)+] (332 aa).

Positions 11, 12, 32, and 106 each coordinate NADPH. Sn-glycerol 3-phosphate-binding residues include K106, G137, and S139. Position 141 (A141) interacts with NADPH. Sn-glycerol 3-phosphate-binding residues include K192, D245, S255, R256, and N257. K192 functions as the Proton acceptor in the catalytic mechanism. An NADPH-binding site is contributed by R256. 2 residues coordinate NADPH: V280 and E282.

This sequence belongs to the NAD-dependent glycerol-3-phosphate dehydrogenase family.

The protein resides in the cytoplasm. The catalysed reaction is sn-glycerol 3-phosphate + NAD(+) = dihydroxyacetone phosphate + NADH + H(+). It catalyses the reaction sn-glycerol 3-phosphate + NADP(+) = dihydroxyacetone phosphate + NADPH + H(+). It functions in the pathway membrane lipid metabolism; glycerophospholipid metabolism. Functionally, catalyzes the reduction of the glycolytic intermediate dihydroxyacetone phosphate (DHAP) to sn-glycerol 3-phosphate (G3P), the key precursor for phospholipid synthesis. The polypeptide is Glycerol-3-phosphate dehydrogenase [NAD(P)+] (Staphylococcus epidermidis (strain ATCC 12228 / FDA PCI 1200)).